A 288-amino-acid polypeptide reads, in one-letter code: 4-diphosphocytidyl-2-C-methyl-D-erythritol kinase (288 aa).

The active site involves Lys8. 92 to 102 serves as a coordination point for ATP; the sequence is PVAAGMAGGST. Asp134 is an active-site residue.

Belongs to the GHMP kinase family. IspE subfamily.

The catalysed reaction is 4-CDP-2-C-methyl-D-erythritol + ATP = 4-CDP-2-C-methyl-D-erythritol 2-phosphate + ADP + H(+). It participates in isoprenoid biosynthesis; isopentenyl diphosphate biosynthesis via DXP pathway; isopentenyl diphosphate from 1-deoxy-D-xylulose 5-phosphate: step 3/6. Its function is as follows. Catalyzes the phosphorylation of the position 2 hydroxy group of 4-diphosphocytidyl-2C-methyl-D-erythritol. This chain is 4-diphosphocytidyl-2-C-methyl-D-erythritol kinase, found in Clostridium perfringens (strain 13 / Type A).